Reading from the N-terminus, the 55-residue chain is MIIYRQYHHEGAPVYEIITKTFQHVSIKCDDSFSDTEIFKLLSLLQDDIDHMKVS.

This chain is Protein VraX (vraX), found in Staphylococcus aureus (strain COL).